The chain runs to 140 residues: Phospholipase A2 (140 aa).

Positions 1 to 21 (MNPAHLLVLAAVCISLSGASS) are cleaved as a signal peptide. The propeptide occupies 22 to 27 (IAPQPL). Disulfide bonds link Cys38–Cys97, Cys52–Cys139, Cys54–Cys70, Cys69–Cys125, Cys76–Cys118, Cys86–Cys111, and Cys104–Cys116. A glycan (N-linked (GlcNAc...) asparagine) is linked at Asn39. Ca(2+) contacts are provided by Tyr53, Gly55, and Gly57. His73 is a catalytic residue. Asp74 contributes to the Ca(2+) binding site. A glycan (N-linked (GlcNAc...) asparagine) is linked at Asn107. Asp119 is an active-site residue.

The protein belongs to the phospholipase A2 family. Group I subfamily. D49 sub-subfamily. Ca(2+) serves as cofactor. Expressed by the venom gland.

The protein localises to the secreted. The enzyme catalyses a 1,2-diacyl-sn-glycero-3-phosphocholine + H2O = a 1-acyl-sn-glycero-3-phosphocholine + a fatty acid + H(+). In terms of biological role, PLA2 catalyzes the calcium-dependent hydrolysis of the 2-acyl groups in 3-sn-phosphoglycerides. This Micrurus altirostris (Uruguayan coral snake) protein is Phospholipase A2.